Reading from the N-terminus, the 394-residue chain is NAD(P)H-quinone oxidoreductase subunit H (394 aa).

This sequence belongs to the complex I 49 kDa subunit family. As to quaternary structure, NDH-1 can be composed of about 15 different subunits; different subcomplexes with different compositions have been identified which probably have different functions.

The protein localises to the cellular thylakoid membrane. The catalysed reaction is a plastoquinone + NADH + (n+1) H(+)(in) = a plastoquinol + NAD(+) + n H(+)(out). The enzyme catalyses a plastoquinone + NADPH + (n+1) H(+)(in) = a plastoquinol + NADP(+) + n H(+)(out). In terms of biological role, NDH-1 shuttles electrons from an unknown electron donor, via FMN and iron-sulfur (Fe-S) centers, to quinones in the respiratory and/or the photosynthetic chain. The immediate electron acceptor for the enzyme in this species is believed to be plastoquinone. Couples the redox reaction to proton translocation, and thus conserves the redox energy in a proton gradient. Cyanobacterial NDH-1 also plays a role in inorganic carbon-concentration. The protein is NAD(P)H-quinone oxidoreductase subunit H of Synechococcus sp. (strain RCC307).